The sequence spans 143 residues: Large-conductance mechanosensitive channel (143 aa).

Helical transmembrane passes span Val-16–Leu-36, Ile-40–Ile-60, and Gly-87–Val-107.

The protein belongs to the MscL family. Homopentamer.

It localises to the cell inner membrane. Channel that opens in response to stretch forces in the membrane lipid bilayer. May participate in the regulation of osmotic pressure changes within the cell. In Psychrobacter sp. (strain PRwf-1), this protein is Large-conductance mechanosensitive channel.